The sequence spans 761 residues: Translational repressor ifet-1 (761 aa).

Disordered regions lie at residues 101–274, 386–446, 557–592, 681–702, and 730–761; these read SPQR…SSGG, KGME…QHLH, VQRQ…AHNQ, QQAQ…QQHQ, and GSQF…AVPK. Basic and acidic residues-rich tracts occupy residues 114–128, 164–189, and 212–222; these read PTDD…ERLG, RGTR…EERL, and IELRGFDEPKK. 4 stretches are compositionally biased toward polar residues: residues 400–410, 557–568, 576–592, and 690–702; these read QDPSQQAQLLQ, VQRQLQKSSSNA, SQSP…AHNQ, and ERQG…QQHQ.

Interacts with cgh-1. Interacts with ife-1 and oma-1. As to expression, in the embryo, significantly enriched in the germ cell lineage.

Its subcellular location is the cytoplasm. In terms of biological role, involved in translational repression of multiple mRNAs in the distal gonad. Recruited to the 3' untranslated region (UTR) of zif-1 by oma-1 and is required for translational repression of zif-1. May also be involved in translational repression of mei-1 through recruitment to the mei-1 3' UTR by oma-1. Required for oogenesis but not spermatogenesis, for P granule formation and for the localization of car-1 and cgh-1 to P granules. Required for normal spindle orientation in early embryos. The sequence is that of Translational repressor ifet-1 from Caenorhabditis elegans.